A 209-amino-acid chain; its full sequence is Protein bli-3 (209 aa).

Residues 1–11 (MSGQGFSNADT) show a composition bias toward polar residues. The interval 1–24 (MSGQGFSNADTGNKPADPYKQANL) is disordered.

The polypeptide is Protein bli-3 (bli-3) (Neurospora crassa (strain ATCC 24698 / 74-OR23-1A / CBS 708.71 / DSM 1257 / FGSC 987)).